Consider the following 365-residue polypeptide: DNA polymerase IV (365 aa).

The region spanning 14–198 (IIHIDMDAFF…LPIEKFHGVG (185 aa)) is the UmuC domain. Residues D18 and D116 each contribute to the Mg(2+) site. The active site involves E117.

It belongs to the DNA polymerase type-Y family. In terms of assembly, monomer. Mg(2+) serves as cofactor.

It is found in the cytoplasm. It catalyses the reaction DNA(n) + a 2'-deoxyribonucleoside 5'-triphosphate = DNA(n+1) + diphosphate. Functionally, poorly processive, error-prone DNA polymerase involved in untargeted mutagenesis. Copies undamaged DNA at stalled replication forks, which arise in vivo from mismatched or misaligned primer ends. These misaligned primers can be extended by PolIV. Exhibits no 3'-5' exonuclease (proofreading) activity. May be involved in translesional synthesis, in conjunction with the beta clamp from PolIII. This Streptococcus pyogenes serotype M3 (strain ATCC BAA-595 / MGAS315) protein is DNA polymerase IV.